A 331-amino-acid chain; its full sequence is FMRFamide-related neuropeptides (331 aa).

The N-terminal stretch at 1 to 25 is a signal peptide; it reads MRCWSPCSLLVVIAIYCLSSHTSEA. Positions 26–65 are excised as a propeptide; the sequence is FDLAQACVESQRLSLLPICDTIFAVQQEGAQQSADDGLRS. A phenylalanine amide mark is found at phenylalanine 71 and phenylalanine 83. Positions 86-94 are excised as a propeptide; the sequence is NVPDLPFED. Phenylalanine amide is present on phenylalanine 100. Residues 103 to 168 constitute a propeptide that is removed on maturation; the sequence is AAPQLDDLLK…YVDDVEDSDV (66 aa). Residues 122–153 are disordered; that stretch reads QKSDDTSVRRKRSTDAAPQSNTDSAEQKNDSA. 2 positions are modified to phenylalanine amide: phenylalanine 174 and phenylalanine 181. A propeptide spanning residues 184–194 is cleaved from the precursor; sequence NPSDVGSKLTE. Position 200 is a phenylalanine amide (phenylalanine 200). The propeptide occupies 203-205; sequence DPE. Phenylalanine amide is present on phenylalanine 211. The propeptide occupies 214 to 216; it reads SDD. Phenylalanine 222 bears the Phenylalanine amide mark. Residues 225 to 236 constitute a propeptide that is removed on maturation; it reads NPGDAEDELEED. The residue at position 242 (phenylalanine 242) is a Phenylalanine amide. The propeptide occupies 245–254; it reads GDEEDEEEAE. Residue phenylalanine 260 is modified to Phenylalanine amide. Residues 263-265 constitute a propeptide that is removed on maturation; the sequence is DPE. The residue at position 271 (phenylalanine 271) is a Phenylalanine amide. Positions 274–277 are excised as a propeptide; sequence NGEE. Phenylalanine 283 carries the post-translational modification Phenylalanine amide. Positions 286–293 are excised as a propeptide; that stretch reads NPEEPEAD. Phenylalanine 299 is modified (phenylalanine amide). Positions 302–312 are excised as a propeptide; sequence GGEEDDVNTEE. Phenylalanine 318 is modified (phenylalanine amide). A propeptide spanning residues 321–331 is cleaved from the precursor; the sequence is SAEKCKGCLEG.

This sequence belongs to the FARP (FMRFamide related peptide) family. In terms of tissue distribution, present ubiquitously in the brain and regions of the central nervous system as well as in the periphery and throughout the dermal chromatophore layer (at protein level).

Its subcellular location is the secreted. Its function is as follows. Excitatory neurotransmitters that directly modulate chromatophore function by activating chromatophore expansion at the chromatophore neuromuscular junction. This is FMRFamide-related neuropeptides from Sepia officinalis (Common cuttlefish).